The chain runs to 338 residues: UDP-glucose 4-epimerase (338 aa).

NAD(+)-binding positions include tyrosine 16–isoleucine 17, isoleucine 37–threonine 42, asparagine 59–leucine 60, phenylalanine 81–threonine 85, threonine 126, tyrosine 153, lysine 157, and phenylalanine 181. Residues threonine 126 and tyrosine 153 each contribute to the substrate site. The active-site Proton acceptor is tyrosine 153. Residues asparagine 182, threonine 198 to leucine 199, phenylalanine 215 to tyrosine 217, arginine 230, and arginine 294 to aspartate 297 each bind substrate.

The protein belongs to the NAD(P)-dependent epimerase/dehydratase family. In terms of assembly, homodimer. Requires NAD(+) as cofactor.

The enzyme catalyses UDP-alpha-D-glucose = UDP-alpha-D-galactose. It functions in the pathway carbohydrate metabolism; galactose metabolism. In terms of biological role, involved in the metabolism of galactose. Catalyzes the conversion of UDP-galactose (UDP-Gal) to UDP-glucose (UDP-Glc) through a mechanism involving the transient reduction of NAD. The protein is UDP-glucose 4-epimerase (galE) of Mycoplasma pneumoniae (strain ATCC 29342 / M129 / Subtype 1) (Mycoplasmoides pneumoniae).